The chain runs to 1342 residues: WD repeat-containing protein 19 (1342 aa).

6 WD repeats span residues 11–51 (TWLG…RSEI), 52–92 (NLPG…TSQL), 95–134 (GMRDQMSFLLWSKVGSFLAVGTVKGNLLIYNHQTSRKIPV), 137–175 (KHTKRITCGCWNAENLLALGGEDKMITVSNQEGDTIRQT), 273–311 (NHKDNLTSIAVSQTLNKVATCGDNCIKIQDLVDLKDMYV), and 317–356 (EENKGLGTLSWTDDGQLLALSTQRGSLHVFLTKLPILGDA). TPR repeat units lie at residues 736-769 (AQDLYLASSCPIAALEMRRDLQHWDSALQLAKHL), 775-808 (PFISKEYAIQLEFAGDYVNALAHYEKGITGDNKE), 840-873 (RVLKRDCGAILENMKQFSEAAQLYEKGLYYDKAA), 895-928 (PKIHLQYAKAKEADGRYKEAVVAYENAKQWQSVI), 951-984 (LDGAKMVARFFLQLGDYGSAIQFLVMSKCNNEAF), and 1020-1053 (EKRYLQAGKFFLLCGQYSRALKHFLKCPSSEDNV).

In terms of assembly, component of the IFT complex A (IFT-A) complex. IFT-A complex is divided into a core subcomplex composed of IFT122:IFT140:WDR19 which is associated with TULP3 and a peripheral subcomplex composed of IFT43:WDR35:TTC21B. Interacts (via C-terminal region) with IFT122 (via C-terminal region). Interacts with BBS1. Interacts with TTC25. As to expression, some isoforms are tissue-specific. Highly expressed in the prostate. Lower expression in the cerebellum, pituitary gland, fetal lung, and pancreas. In normal prostate, expressed in both basal and luminal epithelial cells. No expression detected in fibromuscular stromal cells, endothelial cells, or infiltrating lymphocytes. Uniformed expression in prostate adenocarcinoma cells.

Its subcellular location is the cell projection. It localises to the cilium. It is found in the cytoplasm. The protein resides in the cytoskeleton. The protein localises to the cilium basal body. Its subcellular location is the photoreceptor outer segment. It localises to the flagellum. Functionally, as component of the IFT complex A (IFT-A), a complex required for retrograde ciliary transport and entry into cilia of G protein-coupled receptors (GPCRs), it is involved in cilia function and/or assembly. Essential for functional IFT-A assembly and ciliary entry of GPCRs. Associates with the BBSome complex to mediate ciliary transport. This Homo sapiens (Human) protein is WD repeat-containing protein 19.